Consider the following 310-residue polypeptide: Protoheme IX farnesyltransferase (310 aa).

A run of 9 helical transmembrane segments spans residues 31 to 51 (VMSL…DSIH), 52 to 72 (PLIA…AGAM), 102 to 119 (ALSF…FMAL), 123 to 145 (ILAS…IWLK), 151 to 171 (NIVI…AAVS), 179 to 199 (IILF…IALF), 225 to 245 (ILIY…IGMN), 248 to 268 (IYLI…FSLF), and 281 to 301 (FTYS…TSTI).

The protein belongs to the UbiA prenyltransferase family. Protoheme IX farnesyltransferase subfamily.

The protein localises to the cell inner membrane. It carries out the reaction heme b + (2E,6E)-farnesyl diphosphate + H2O = Fe(II)-heme o + diphosphate. It functions in the pathway porphyrin-containing compound metabolism; heme O biosynthesis; heme O from protoheme: step 1/1. Functionally, converts heme B (protoheme IX) to heme O by substitution of the vinyl group on carbon 2 of heme B porphyrin ring with a hydroxyethyl farnesyl side group. This Rickettsia prowazekii (strain Madrid E) protein is Protoheme IX farnesyltransferase.